The sequence spans 125 residues: Small ribosomal subunit protein uS12 (125 aa).

Asp89 is subject to 3-methylthioaspartic acid.

The protein belongs to the universal ribosomal protein uS12 family. In terms of assembly, part of the 30S ribosomal subunit. Contacts proteins S8 and S17. May interact with IF1 in the 30S initiation complex.

Its function is as follows. With S4 and S5 plays an important role in translational accuracy. Functionally, interacts with and stabilizes bases of the 16S rRNA that are involved in tRNA selection in the A site and with the mRNA backbone. Located at the interface of the 30S and 50S subunits, it traverses the body of the 30S subunit contacting proteins on the other side and probably holding the rRNA structure together. The combined cluster of proteins S8, S12 and S17 appears to hold together the shoulder and platform of the 30S subunit. The sequence is that of Small ribosomal subunit protein uS12 from Cupriavidus pinatubonensis (strain JMP 134 / LMG 1197) (Cupriavidus necator (strain JMP 134)).